Reading from the N-terminus, the 567-residue chain is MEIAVIVLLLLGGVMIYNHVYRKKMYSEIDRLEAWKISIMNRPVPDELSKVKQLNMTGETEQLFEKWRQKWDDLVAVKLPDVEEKLFDTEELLDKYRYAKAKAVLREIDQLLRQAEEEVQLIIDEVHELIGSEEQNRTEIEELRTMYREAKKTLLAYRYTFGVAAAKLDEKLEEIESKFKQFEELTASGNYLAAREIVLSSKGELNKVTEMMSDIPELLTECQTTIPAQLEELYDGYKEMKQEGYILDHLQIDREIVQKREKIEQCMQMIGDLQIEEAKQGITEIKEEIDTLYDLLEKEVISHHYIKTEMSRIEEMLNELNEEAKETSEETLFVQQSYRLSTKDLEKYRSIEKQIHQLMKRFEIIQARILEAKTAHSLLKEELEQLLAQIEMMKEEHEEFRKMLQTLRKDELVAREKLDEMKKKLSEAMRLVQKSRLPGLPKSYELQLSEAKDSLMKVAVRLEEKPLNMSAVHQALEESGNMVQRVYERTVEMIEQASLVEKVIQYGNRYRRRYPSVKEGLEEAEFLFRHYDYEQALEQAVAALEKVEPGALQRIQQIFRDERSKEE.

Residues 1–2 are Extracellular-facing; that stretch reads ME. The helical transmembrane segment at 3–21 threads the bilayer; it reads IAVIVLLLLGGVMIYNHVY. The Cytoplasmic segment spans residues 22 to 567; the sequence is RKKMYSEIDR…IFRDERSKEE (546 aa). Coiled-coil stretches lie at residues 97–188 and 254–465; these read RYAK…LTAS and REIV…LEEK.

This sequence belongs to the EzrA family.

Its subcellular location is the cell membrane. Functionally, negative regulator of FtsZ ring formation; modulates the frequency and position of FtsZ ring formation. Inhibits FtsZ ring formation at polar sites. Interacts either with FtsZ or with one of its binding partners to promote depolymerization. This is Septation ring formation regulator EzrA from Geobacillus sp. (strain WCH70).